Consider the following 331-residue polypeptide: Vitamin B12 import system permease protein BtuC (331 aa).

9 helical membrane-spanning segments follow: residues 18–38 (WLFGLTLLLLVTLLISLCAGE), 64–84 (LAVLLVGAALALSGAIMQALF), 91–111 (PGLLGISNGAGVGLIAAVLLG), 114–134 (VLPGWALGLCAIFGALLITFI), 149–169 (LLAGVALGIICSALMTWAVYF), 194–214 (LWLMIALLPVLCWVCLQSQPL), 243–263 (GWMVGVSVALAGAIGFIGLVI), 277–297 (VLLPACMMAGASALLGADIIA), and 305–325 (ELPIGVVTATLGAPVFIWLLL).

Belongs to the binding-protein-dependent transport system permease family. FecCD subfamily. The complex is composed of two ATP-binding proteins (BtuD), two transmembrane proteins (BtuC) and a solute-binding protein (BtuF).

The protein resides in the cell inner membrane. Its function is as follows. Part of the ABC transporter complex BtuCDF involved in vitamin B12 import. Involved in the translocation of the substrate across the membrane. This Klebsiella pneumoniae subsp. pneumoniae (strain ATCC 700721 / MGH 78578) protein is Vitamin B12 import system permease protein BtuC.